Here is a 352-residue protein sequence, read N- to C-terminus: Transcription factor MYB86 (352 aa).

2 HTH myb-type domains span residues 9 to 61 (KQKL…INYL) and 62 to 116 (RPDL…KKKL). DNA-binding regions (H-T-H motif) lie at residues 37 to 61 (WSSV…INYL) and 89 to 112 (WSQI…NSCL).

In terms of tissue distribution, expressed in stems, flowers and seeds. Weakly expressed in leaves and roots.

It localises to the nucleus. In terms of biological role, probable transcription factor. The polypeptide is Transcription factor MYB86 (MYB86) (Arabidopsis thaliana (Mouse-ear cress)).